Consider the following 131-residue polypeptide: Small ribosomal subunit protein uS8 (131 aa).

This sequence belongs to the universal ribosomal protein uS8 family. As to quaternary structure, part of the 30S ribosomal subunit. Contacts proteins S5 and S12.

In terms of biological role, one of the primary rRNA binding proteins, it binds directly to 16S rRNA central domain where it helps coordinate assembly of the platform of the 30S subunit. This chain is Small ribosomal subunit protein uS8, found in Albidiferax ferrireducens (strain ATCC BAA-621 / DSM 15236 / T118) (Rhodoferax ferrireducens).